We begin with the raw amino-acid sequence, 369 residues long: Tetraacyldisaccharide 4'-kinase (369 aa).

Residue 52 to 59 coordinates ATP; that stretch reads TVGGTGKT.

This sequence belongs to the LpxK family.

It carries out the reaction a lipid A disaccharide + ATP = a lipid IVA + ADP + H(+). It functions in the pathway glycolipid biosynthesis; lipid IV(A) biosynthesis; lipid IV(A) from (3R)-3-hydroxytetradecanoyl-[acyl-carrier-protein] and UDP-N-acetyl-alpha-D-glucosamine: step 6/6. In terms of biological role, transfers the gamma-phosphate of ATP to the 4'-position of a tetraacyldisaccharide 1-phosphate intermediate (termed DS-1-P) to form tetraacyldisaccharide 1,4'-bis-phosphate (lipid IVA). This chain is Tetraacyldisaccharide 4'-kinase, found in Parabacteroides distasonis (strain ATCC 8503 / DSM 20701 / CIP 104284 / JCM 5825 / NCTC 11152).